Consider the following 137-residue polypeptide: DNA-binding protein H-NS (137 aa).

The DNA-binding element occupies 112–117 (QGRTPA).

The protein belongs to the histone-like protein H-NS family. In terms of assembly, homodimer that oligomerizes on DNA into higher-order complexes that form bridges between disparate regions of DNA compacting it. Interacts with Hha, Cnu and StpA.

Its subcellular location is the cytoplasm. It localises to the nucleoid. In terms of biological role, a DNA-binding protein implicated in transcriptional repression and chromosome organization and compaction. Binds nucleation sites in AT-rich DNA and bridges them, forming higher-order nucleoprotein complexes and condensing the chromosome. As many horizontally transferred genes are AT-rich, it plays a central role in silencing foreign genes. A subset of genes are repressed by H-NS in association with other proteins. The sequence is that of DNA-binding protein H-NS (hns) from Escherichia coli O6:H1 (strain CFT073 / ATCC 700928 / UPEC).